A 343-amino-acid polypeptide reads, in one-letter code: Inositol 2-dehydrogenase (343 aa).

This sequence belongs to the Gfo/Idh/MocA family. As to quaternary structure, homotetramer.

It catalyses the reaction myo-inositol + NAD(+) = scyllo-inosose + NADH + H(+). Involved in the oxidation of myo-inositol (MI) to 2-keto-myo-inositol (2KMI or 2-inosose). This Streptomyces avermitilis (strain ATCC 31267 / DSM 46492 / JCM 5070 / NBRC 14893 / NCIMB 12804 / NRRL 8165 / MA-4680) protein is Inositol 2-dehydrogenase.